Reading from the N-terminus, the 273-residue chain is MPLHRREAAPAKLNLTLHVTGRRVDGYHLLDSLVVFLDLGDVVTIAPGPLSLSLTGPFAPGLAAEPDNLCLRAARLAGREARITLEKNLPVASGIGGGSADAAAVLRALDASPRRPEALGADVPVCLASRPVRMRGVGEILAPLPALPELNVLLVNPGRGLSTPAVFKALARHDNPPMPEPLPDFPDAQALIGFLHECRNDLEAPAIALMPGIADCLAALRSAGAQLARMSGSGATCFGLFASAAEAQAARARIAGTNPGWWVAASGLAPAKH.

Residue lysine 12 is part of the active site. 90–100 serves as a coordination point for ATP; that stretch reads PVASGIGGGSA. Aspartate 122 is a catalytic residue.

Belongs to the GHMP kinase family. IspE subfamily.

It carries out the reaction 4-CDP-2-C-methyl-D-erythritol + ATP = 4-CDP-2-C-methyl-D-erythritol 2-phosphate + ADP + H(+). It functions in the pathway isoprenoid biosynthesis; isopentenyl diphosphate biosynthesis via DXP pathway; isopentenyl diphosphate from 1-deoxy-D-xylulose 5-phosphate: step 3/6. Functionally, catalyzes the phosphorylation of the position 2 hydroxy group of 4-diphosphocytidyl-2C-methyl-D-erythritol. This chain is 4-diphosphocytidyl-2-C-methyl-D-erythritol kinase, found in Paracoccus denitrificans (strain Pd 1222).